Reading from the N-terminus, the 299-residue chain is Endonuclease G, mitochondrial (299 aa).

A mitochondrion-targeting transit peptide spans Met1 to Ala48. Thr130 is modified (phosphothreonine). The Proton acceptor role is filled by His143. Asn174 contacts Mg(2+). An essential for deoxyribonuclease activity region spans residues Ala288–Ser298. Ser290 is subject to Phosphoserine.

The protein belongs to the DNA/RNA non-specific endonuclease family. As to quaternary structure, homodimer; disulfide-linked. Homodimerization is essential for its activity. Interacts with YWHAG. The cofactor is Mg(2+). Post-translationally, GSK3-beta-mediated dual phosphorylations at Thr-130 and Ser-290 is necessary for its interaction with YWHAG and the induction of autophagy.

The protein resides in the mitochondrion. Endonuclease that preferentially catalyzes the cleavage of double-stranded 5-hydroxymethylcytosine (5hmC)-modified DNA. The 5hmC-modified nucleotide does not increase the binding affinity, but instead increases the efficiency of cutting and specifies the site of cleavage for the modified DNAs. Shows significantly higher affinity for four- stranded Holliday junction over duplex and single-stranded DNAs. Promotes conservative recombination when the DNA is 5hmC-modified. Promotes autophagy through the suppression of mTOR by its phosphorylation-mediated interaction with YWHAG and its endonuclease activity-mediated DNA damage response. GSK3-beta mediated phosphorylation of ENDOG enhances its interaction with YWHAG, leading to the release of TSC2 and PIK3C3 from YWHAG resulting in mTOR pathway suppression and autophagy initiation. Promotes cleavage of mtDNA in response to oxidative and nitrosative stress, in turn inducing compensatory mtDNA replication. This Bos taurus (Bovine) protein is Endonuclease G, mitochondrial (ENDOG).